Consider the following 290-residue polypeptide: Dihydroorotate dehydrogenase B (NAD(+)), catalytic subunit (290 aa).

Residues serine 17 and 42–43 (KT) each bind FMN. Residues lysine 42, 67–71 (NAIGL), and asparagine 117 each bind substrate. Asparagine 117 provides a ligand contact to FMN. Residue serine 120 is the Nucleophile of the active site. FMN contacts are provided by lysine 152 and isoleucine 177. 178 to 179 (NT) lines the substrate pocket. Residues glycine 203, 229–230 (GG), and 251–252 (GT) each bind FMN.

Belongs to the dihydroorotate dehydrogenase family. Type 1 subfamily. Heterotetramer of 2 PyrK and 2 PyrD type B subunits. Requires FMN as cofactor.

The protein localises to the cytoplasm. The enzyme catalyses (S)-dihydroorotate + NAD(+) = orotate + NADH + H(+). It functions in the pathway pyrimidine metabolism; UMP biosynthesis via de novo pathway; orotate from (S)-dihydroorotate (NAD(+) route): step 1/1. In terms of biological role, catalyzes the conversion of dihydroorotate to orotate with NAD(+) as electron acceptor. The protein is Dihydroorotate dehydrogenase B (NAD(+)), catalytic subunit (pyrD) of Saccharolobus solfataricus (strain ATCC 35092 / DSM 1617 / JCM 11322 / P2) (Sulfolobus solfataricus).